A 118-amino-acid chain; its full sequence is Acidic phospholipase A2 (118 aa).

Positions 25, 27, and 29 each coordinate Ca(2+). His45 is an active-site residue. Residue Asp46 participates in Ca(2+) binding. Asp86 is an active-site residue.

The protein belongs to the phospholipase A2 family. Group II subfamily. D49 sub-subfamily. It depends on Ca(2+) as a cofactor. Post-translationally, six disulfide bonds are present. As to expression, expressed by the venom gland.

The protein localises to the secreted. It carries out the reaction a 1,2-diacyl-sn-glycero-3-phosphocholine + H2O = a 1-acyl-sn-glycero-3-phosphocholine + a fatty acid + H(+). Its function is as follows. PLA2 catalyzes the calcium-dependent hydrolysis of the 2-acyl groups in 3-sn-phosphoglycerides. This is Acidic phospholipase A2 from Bitis gabonica (Gaboon adder).